Reading from the N-terminus, the 72-residue chain is DNA-directed RNA polymerase subunit omega (72 aa).

Belongs to the RNA polymerase subunit omega family. As to quaternary structure, the RNAP catalytic core consists of 2 alpha, 1 beta, 1 beta' and 1 omega subunit. When a sigma factor is associated with the core the holoenzyme is formed, which can initiate transcription.

It catalyses the reaction RNA(n) + a ribonucleoside 5'-triphosphate = RNA(n+1) + diphosphate. Promotes RNA polymerase assembly. Latches the N- and C-terminal regions of the beta' subunit thereby facilitating its interaction with the beta and alpha subunits. The protein is DNA-directed RNA polymerase subunit omega of Francisella philomiragia subsp. philomiragia (strain ATCC 25017 / CCUG 19701 / FSC 153 / O#319-036).